We begin with the raw amino-acid sequence, 555 residues long: Carboxylesterase patB (555 aa).

A signal peptide spans 1–16 (MLFTASLLLLLPWASA). Asn-37 and Asn-75 each carry an N-linked (GlcNAc...) asparagine glycan. The Acyl-ester intermediate role is filled by Ser-258. A substrate-binding site is contributed by Ser-258. Asn-311 carries N-linked (GlcNAc...) asparagine glycosylation. Glu-380 acts as the Charge relay system in catalysis. Asn-388 and Asn-491 each carry an N-linked (GlcNAc...) asparagine glycan.

Belongs to the type-B carboxylesterase/lipase family.

Its subcellular location is the cytoplasm. The protein localises to the cytosol. The catalysed reaction is a carboxylic ester + H2O = an alcohol + a carboxylate + H(+). Its pathway is mycotoxin biosynthesis; patulin biosynthesis. Its function is as follows. Carboxylesterase; part of the gene cluster that mediates the biosynthesis of patulin, an acetate-derived tetraketide mycotoxin produced by several fungal species that shows antimicrobial properties against several bacteria. The function of patB in patulin synthesis has still to be characterized. The pathway begins with the synthesis of 6-methylsalicylic acid by the polyketide synthase (PKS) patK via condensation of acetate and malonate units. The 6-methylsalicylic acid decarboxylase patG then catalyzes the decarboxylation of 6-methylsalicylic acid to yield m-cresol (also known as 3-methylphenol). These first reactions occur in the cytosol. The intermediate m-cresol is then transported into the endoplasmic reticulum where the cytochrome P450 monooxygenase patH converts it to m-hydroxybenzyl alcohol, which is further converted to gentisyl alcohol by the cytochrome P450 monooxygenase patI. The oxidoreductases patJ and patO further convert gentisyl alcohol to isoepoxydon in the vacuole. PatN catalyzes then the transformation of isoepoxydon into phyllostine. The cluster protein patF is responsible for the conversion from phyllostine to neopatulin whereas the alcohol dehydrogenase patD converts neopatulin to E-ascladiol. The steps between isoepoxydon and E-ascladiol occur in the cytosol, and E-ascladiol is probably secreted to the extracellular space by one of the cluster-specific transporters patC or patM. Finally, the secreted patulin synthase patE catalyzes the conversion of E-ascladiol to patulin. This is Carboxylesterase patB from Aspergillus clavatus (strain ATCC 1007 / CBS 513.65 / DSM 816 / NCTC 3887 / NRRL 1 / QM 1276 / 107).